A 674-amino-acid polypeptide reads, in one-letter code: Alpha-L-arabinofuranosidase 2 (674 aa).

Residues 1 to 24 (MDMETSWRFLRSVCLLSFILGSFS) form the signal peptide. N-linked (GlcNAc...) asparagine glycans are attached at residues N48, N180, N199, N210, N361, N522, and N548.

This sequence belongs to the glycosyl hydrolase 51 family. High expression in flowers, siliques and stems. Observed in the vasculature of older root tissue, at the tip of anthers and in the petal blade of fully developed flowers, in floral abscission zones and in silique replum tissue. Expressed in the cambium and phloem, but not in the xylem or in the vascular system of floral tissues.

It localises to the secreted. It is found in the extracellular space. The protein resides in the extracellular matrix. The enzyme catalyses Hydrolysis of terminal non-reducing alpha-L-arabinofuranoside residues in alpha-L-arabinosides.. Its function is as follows. May be involved in the coordinated dissolution of the cell wall matrix during abscission and in the secondary cell wall formation in xylem vessels. The polypeptide is Alpha-L-arabinofuranosidase 2 (ASD2) (Arabidopsis thaliana (Mouse-ear cress)).